We begin with the raw amino-acid sequence, 670 residues long: tRNA 5-methylaminomethyl-2-thiouridine biosynthesis bifunctional protein MnmC (670 aa).

Residues 1-242 are tRNA (mnm(5)s(2)U34)-methyltransferase; sequence MTFSVQHAEI…KRECLSGLKI (242 aa). Positions 269 to 670 are FAD-dependent cmnm(5)s(2)U34 oxidoreductase; it reads IGGGIASFCA…KKWLKGSKVE (402 aa).

This sequence in the N-terminal section; belongs to the methyltransferase superfamily. tRNA (mnm(5)s(2)U34)-methyltransferase family. In the C-terminal section; belongs to the DAO family. It depends on FAD as a cofactor.

It is found in the cytoplasm. The enzyme catalyses 5-aminomethyl-2-thiouridine(34) in tRNA + S-adenosyl-L-methionine = 5-methylaminomethyl-2-thiouridine(34) in tRNA + S-adenosyl-L-homocysteine + H(+). In terms of biological role, catalyzes the last two steps in the biosynthesis of 5-methylaminomethyl-2-thiouridine (mnm(5)s(2)U) at the wobble position (U34) in tRNA. Catalyzes the FAD-dependent demodification of cmnm(5)s(2)U34 to nm(5)s(2)U34, followed by the transfer of a methyl group from S-adenosyl-L-methionine to nm(5)s(2)U34, to form mnm(5)s(2)U34. The chain is tRNA 5-methylaminomethyl-2-thiouridine biosynthesis bifunctional protein MnmC from Haemophilus influenzae (strain 86-028NP).